The sequence spans 226 residues: Leucyl/phenylalanyl-tRNA--protein transferase (226 aa).

This sequence belongs to the L/F-transferase family.

It is found in the cytoplasm. It carries out the reaction N-terminal L-lysyl-[protein] + L-leucyl-tRNA(Leu) = N-terminal L-leucyl-L-lysyl-[protein] + tRNA(Leu) + H(+). The enzyme catalyses N-terminal L-arginyl-[protein] + L-leucyl-tRNA(Leu) = N-terminal L-leucyl-L-arginyl-[protein] + tRNA(Leu) + H(+). The catalysed reaction is L-phenylalanyl-tRNA(Phe) + an N-terminal L-alpha-aminoacyl-[protein] = an N-terminal L-phenylalanyl-L-alpha-aminoacyl-[protein] + tRNA(Phe). Its function is as follows. Functions in the N-end rule pathway of protein degradation where it conjugates Leu, Phe and, less efficiently, Met from aminoacyl-tRNAs to the N-termini of proteins containing an N-terminal arginine or lysine. In Pseudomonas paraeruginosa (strain DSM 24068 / PA7) (Pseudomonas aeruginosa (strain PA7)), this protein is Leucyl/phenylalanyl-tRNA--protein transferase.